Consider the following 94-residue polypeptide: Large ribosomal subunit protein eL37 (94 aa).

Residues Cys-19, Cys-22, Cys-34, and Cys-37 each coordinate Zn(2+). A C4-type zinc finger spans residues 19–37 (CRRCGKATYHKQKLRCAAC).

It belongs to the eukaryotic ribosomal protein eL37 family. Requires Zn(2+) as cofactor.

It localises to the cytoplasm. Binds to the 23S rRNA. The protein is Large ribosomal subunit protein eL37 (RPL37) of Tetrahymena thermophila (strain SB210).